A 790-amino-acid polypeptide reads, in one-letter code: Disintegrin and metalloproteinase domain-containing protein 30 (790 aa).

A signal peptide spans M1–G27. Residues E28 to S198 constitute a propeptide that is removed on maturation. The Cysteine switch signature appears at Q170–D177. C172 lines the Zn(2+) pocket. Residues Y199–W687 are Extracellular-facing. Residues K203–P393 enclose the Peptidase M12B domain. N-linked (GlcNAc...) asparagine glycosylation is present at N222. 3 cysteine pairs are disulfide-bonded: C313/C388, C353/C373, and C355/C361. H338 serves as a coordination point for Zn(2+). The active site involves E339. H342 and H348 together coordinate Zn(2+). N-linked (GlcNAc...) asparagine glycosylation is found at N372, N438, N473, and N625. In terms of domain architecture, Disintegrin spans L399 to D485. C457 and C477 form a disulfide bridge. An EGF-like domain is found at L629–E663. 3 disulfide bridges follow: C633–C644, C638–C650, and C652–C661. A helical membrane pass occupies residues V688–F708. At R709–K790 the chain is on the cytoplasmic side. Residues Q720–R779 show a composition bias toward basic and acidic residues. The segment at Q720–K790 is disordered. Tandem repeats lie at residues Q732 to V740, Q741 to G749, Q750 to G758, Q759 to G767, and Q768 to E776. The interval Q732–E776 is 5 X 9 AA approximate repeats. Residues P780–K790 show a composition bias toward basic residues.

In terms of assembly, interacts with CTSD; this leads to activation of CTSD. Requires Zn(2+) as cofactor. Expressed in brain neurons (at protein level). Expressed in testis.

It localises to the late endosome membrane. In terms of biological role, plays a role in lysosomal amyloid precursor protein (APP) processing by cleaving and activating CTSD/cathepsin D which leads to APP degradation. The chain is Disintegrin and metalloproteinase domain-containing protein 30 (ADAM30) from Homo sapiens (Human).